The chain runs to 356 residues: Tyrosine recombinase XerS (356 aa).

The 106-residue stretch at 16–121 (IMPWYVLDYY…ALSSLYKYLT (106 aa)) folds into the Core-binding (CB) domain. Residues 169–354 (AFLDYVDKEY…VNDEQKNALD (186 aa)) enclose the Tyr recombinase domain. Catalysis depends on residues Arg-210, Lys-234, His-306, Arg-309, and His-332. Tyr-341 acts as the O-(3'-phospho-DNA)-tyrosine intermediate in catalysis.

This sequence belongs to the 'phage' integrase family. XerS subfamily.

Its subcellular location is the cytoplasm. Its activity is regulated as follows. FtsK is required for recombination. Its function is as follows. Site-specific tyrosine recombinase, which acts by catalyzing the cutting and rejoining of the recombining DNA molecules. Essential to convert dimers of the bacterial chromosome into monomers to permit their segregation at cell division. This chain is Tyrosine recombinase XerS, found in Streptococcus pyogenes serotype M6 (strain ATCC BAA-946 / MGAS10394).